The following is a 369-amino-acid chain: Probable trehalose-phosphate phosphatase D (369 aa).

Residues 63 to 85 (RASSPTRTRPGNISPLPESDEED) form a disordered region.

This sequence belongs to the trehalose phosphatase family. The cofactor is a divalent metal cation.

It catalyses the reaction alpha,alpha-trehalose 6-phosphate + H2O = alpha,alpha-trehalose + phosphate. The protein operates within glycan biosynthesis; trehalose biosynthesis. Removes the phosphate from trehalose 6-phosphate to produce free trehalose. Trehalose accumulation in plant may improve abiotic stress tolerance. The sequence is that of Probable trehalose-phosphate phosphatase D (TPPD) from Arabidopsis thaliana (Mouse-ear cress).